A 498-amino-acid chain; its full sequence is Lysine--tRNA ligase (498 aa).

Residues Glu409 and Glu416 each contribute to the Mg(2+) site.

Belongs to the class-II aminoacyl-tRNA synthetase family. As to quaternary structure, homodimer. Requires Mg(2+) as cofactor.

Its subcellular location is the cytoplasm. It catalyses the reaction tRNA(Lys) + L-lysine + ATP = L-lysyl-tRNA(Lys) + AMP + diphosphate. The protein is Lysine--tRNA ligase of Coxiella burnetii (strain CbuK_Q154) (Coxiella burnetii (strain Q154)).